Consider the following 480-residue polypeptide: Phosphomethylpyrimidine synthase (480 aa).

Substrate-binding positions include N66, M95, Y124, H159, 179 to 181, 220 to 223, and E259; these read SRG and DGLR. H263 provides a ligand contact to Zn(2+). Y286 provides a ligand contact to substrate. Residue H327 coordinates Zn(2+). The [4Fe-4S] cluster site is built by C407, C410, and C415. Residues 426 to 480 are disordered; the sequence is DGDMESIEADADDRTPLEDSSAAAVNRPPVGTHDGADIPGPDADMPADTEGSADD. Acidic residues predominate over residues 470-480; sequence MPADTEGSADD.

It belongs to the ThiC family. [4Fe-4S] cluster is required as a cofactor.

The enzyme catalyses 5-amino-1-(5-phospho-beta-D-ribosyl)imidazole + S-adenosyl-L-methionine = 4-amino-2-methyl-5-(phosphooxymethyl)pyrimidine + CO + 5'-deoxyadenosine + formate + L-methionine + 3 H(+). It participates in cofactor biosynthesis; thiamine diphosphate biosynthesis. Its function is as follows. Catalyzes the synthesis of the hydroxymethylpyrimidine phosphate (HMP-P) moiety of thiamine from aminoimidazole ribotide (AIR) in a radical S-adenosyl-L-methionine (SAM)-dependent reaction. In Haloarcula marismortui (strain ATCC 43049 / DSM 3752 / JCM 8966 / VKM B-1809) (Halobacterium marismortui), this protein is Phosphomethylpyrimidine synthase.